A 332-amino-acid chain; its full sequence is Centrosomal AT-AC splicing factor (332 aa).

Positions 1-169 (MAPAQRCPLC…QSRQEVVRSV (169 aa)) are required for centrosome location. Lysine 31 bears the N6-acetyllysine; by NAT10 mark. The stretch at 137 to 168 (LDSYEEKEDKVIKEMAAQIREVEQSRQEVVRS) forms a coiled coil. The interval 169–213 (VLEPQAVPDPEEGSSAPRSWKGMNSQVASSLQQPSNLDLPPAPEL) is disordered. The span at 190–204 (GMNSQVASSLQQPSN) shows a compositional bias: polar residues.

Interacts with SASS6; the interaction increases with CENATAC acetylation. In terms of processing, acetylated. Acetylation oscillates throughout the cell cycle, and the acetylation state at Lys-31 is regulated by the deacetylase SIRT1 and the acetyltransferase NAT10. Deacetylated CENATAC is responsible for its centrosome targeting, and acetylated CENATAC promotes SASS6 degradation by enhancing the binding affinity of SASS6 for APC/C E3 ubiquitin-protein ligase complex/FZR1.

Its subcellular location is the cytoplasm. It localises to the cytoskeleton. The protein resides in the microtubule organizing center. It is found in the centrosome. In terms of biological role, component of the minor spliceosome that promotes splicing of a specific, rare minor intron subtype. Negative regulator of centrosome duplication. Constrains centriole number by modulating the degradation of the centrosome-duplication-associated protein SASS6 in an acetylation-dependent manner. SIRT1 deacetylates CENATAC in G1 phase, allowing for SASS6 accumulation on the centrosome and subsequent procentriole assembly. The CENATAC acetylation level is restored in mitosis by NAT10, promoting SASS6 proteasome degradation by facilitating SASS6 binding to APC/C E3 ubiquitin-protein ligase complex/FZR1. In Homo sapiens (Human), this protein is Centrosomal AT-AC splicing factor.